The following is a 393-amino-acid chain: Chorismate synthase (393 aa).

Arg40 and Arg46 together coordinate NADP(+). Residues 135–137 (RAS), 257–258 (QA), Gly301, 316–320 (KPIAT), and Arg342 each bind FMN. The disordered stretch occupies residues 280–306 (DEIDVGPDGIRRRSNRAGGVEGGMSTG).

The protein belongs to the chorismate synthase family. Homotetramer. The cofactor is FMNH2.

The catalysed reaction is 5-O-(1-carboxyvinyl)-3-phosphoshikimate = chorismate + phosphate. The protein operates within metabolic intermediate biosynthesis; chorismate biosynthesis; chorismate from D-erythrose 4-phosphate and phosphoenolpyruvate: step 7/7. Its function is as follows. Catalyzes the anti-1,4-elimination of the C-3 phosphate and the C-6 proR hydrogen from 5-enolpyruvylshikimate-3-phosphate (EPSP) to yield chorismate, which is the branch point compound that serves as the starting substrate for the three terminal pathways of aromatic amino acid biosynthesis. This reaction introduces a second double bond into the aromatic ring system. This Thermobifida fusca (strain YX) protein is Chorismate synthase.